Here is a 141-residue protein sequence, read N- to C-terminus: Large ribosomal subunit protein uL11 (141 aa).

The protein belongs to the universal ribosomal protein uL11 family. As to quaternary structure, part of the ribosomal stalk of the 50S ribosomal subunit. Interacts with L10 and the large rRNA to form the base of the stalk. L10 forms an elongated spine to which L12 dimers bind in a sequential fashion forming a multimeric L10(L12)X complex. Post-translationally, one or more lysine residues are methylated.

Forms part of the ribosomal stalk which helps the ribosome interact with GTP-bound translation factors. The chain is Large ribosomal subunit protein uL11 from Geobacillus thermodenitrificans (strain NG80-2).